Consider the following 208-residue polypeptide: Uridine kinase (208 aa).

12 to 19 (GGSGGGKT) serves as a coordination point for ATP.

It belongs to the uridine kinase family.

It localises to the cytoplasm. The enzyme catalyses uridine + ATP = UMP + ADP + H(+). It carries out the reaction cytidine + ATP = CMP + ADP + H(+). The protein operates within pyrimidine metabolism; CTP biosynthesis via salvage pathway; CTP from cytidine: step 1/3. It functions in the pathway pyrimidine metabolism; UMP biosynthesis via salvage pathway; UMP from uridine: step 1/1. The protein is Uridine kinase of Streptococcus pyogenes serotype M3 (strain ATCC BAA-595 / MGAS315).